Consider the following 863-residue polypeptide: Leucine--tRNA ligase (863 aa).

Residues 41–51 (PYPSGRIHIGH) carry the 'HIGH' region motif. The short motif at 627 to 631 (KMSKS) is the 'KMSKS' region element. Residue lysine 630 participates in ATP binding.

It belongs to the class-I aminoacyl-tRNA synthetase family.

Its subcellular location is the cytoplasm. The catalysed reaction is tRNA(Leu) + L-leucine + ATP = L-leucyl-tRNA(Leu) + AMP + diphosphate. This Jannaschia sp. (strain CCS1) protein is Leucine--tRNA ligase.